The sequence spans 381 residues: Peptidoglycan glycosyltransferase MrdB (381 aa).

The next 10 membrane-spanning stretches (helical) occupy residues 11 to 31 (FDLLPFVFIIPLLVVSFLLIF), 40 to 60 (KQGVYYAIGFLLFWVVFFIPF), 66 to 86 (WLFALYWACVILLALVDFMGS), 102 to 122 (ITLQPSEPVKIAILLLLAHLI), 132 to 152 (YDWGMFLKLSFYICLPAALIL), 156 to 176 (DLGTALIVLIMGFGILLIVGL), 180 to 200 (VWLPLLIALIVASPIAYHFLH), 263 to 283 (FGFLGAILLFAIYIGLSLHLF), 297 to 317 (IVALGISILIFVYSSVNIAMT), and 328 to 348 (LPLFSYGGSSFITFMILFAIL).

The protein belongs to the SEDS family. MrdB/RodA subfamily.

The protein resides in the cell inner membrane. The catalysed reaction is [GlcNAc-(1-&gt;4)-Mur2Ac(oyl-L-Ala-gamma-D-Glu-L-Lys-D-Ala-D-Ala)](n)-di-trans,octa-cis-undecaprenyl diphosphate + beta-D-GlcNAc-(1-&gt;4)-Mur2Ac(oyl-L-Ala-gamma-D-Glu-L-Lys-D-Ala-D-Ala)-di-trans,octa-cis-undecaprenyl diphosphate = [GlcNAc-(1-&gt;4)-Mur2Ac(oyl-L-Ala-gamma-D-Glu-L-Lys-D-Ala-D-Ala)](n+1)-di-trans,octa-cis-undecaprenyl diphosphate + di-trans,octa-cis-undecaprenyl diphosphate + H(+). It participates in cell wall biogenesis; peptidoglycan biosynthesis. Its function is as follows. Peptidoglycan polymerase that is essential for cell wall elongation. This chain is Peptidoglycan glycosyltransferase MrdB, found in Helicobacter pylori (strain J99 / ATCC 700824) (Campylobacter pylori J99).